Consider the following 635-residue polypeptide: Probable extracellular metalloproteinase 1 (635 aa).

Positions 1-19 are cleaved as a signal peptide; the sequence is MHGLLLAAGLLSLPLHVLA. Positions 20–246 are excised as a propeptide; sequence HPQPSTSTSL…VHNVVDYVAH (227 aa). N287 is a glycosylation site (N-linked (GlcNAc...) asparagine). H430 is a binding site for Zn(2+). Residue E431 is part of the active site. Zn(2+) is bound at residue H434. N-linked (GlcNAc...) asparagine glycosylation is found at N475, N594, and N623.

This sequence belongs to the peptidase M36 family. It depends on Zn(2+) as a cofactor.

Its subcellular location is the secreted. Secreted metalloproteinase probably acting as a virulence factor. The protein is Probable extracellular metalloproteinase 1 (MEP1) of Trichophyton verrucosum (strain HKI 0517).